Consider the following 419-residue polypeptide: UDP-N-acetylglucosamine 1-carboxyvinyltransferase (419 aa).

22-23 (KN) serves as a coordination point for phosphoenolpyruvate. Arg95 contributes to the UDP-N-acetyl-alpha-D-glucosamine binding site. Catalysis depends on Cys119, which acts as the Proton donor. Position 119 is a 2-(S-cysteinyl)pyruvic acid O-phosphothioketal (Cys119). Residues 164–167 (KVSV), Asp308, and Ile330 each bind UDP-N-acetyl-alpha-D-glucosamine.

Belongs to the EPSP synthase family. MurA subfamily.

It is found in the cytoplasm. The catalysed reaction is phosphoenolpyruvate + UDP-N-acetyl-alpha-D-glucosamine = UDP-N-acetyl-3-O-(1-carboxyvinyl)-alpha-D-glucosamine + phosphate. Its pathway is cell wall biogenesis; peptidoglycan biosynthesis. Cell wall formation. Adds enolpyruvyl to UDP-N-acetylglucosamine. This chain is UDP-N-acetylglucosamine 1-carboxyvinyltransferase, found in Rickettsia felis (strain ATCC VR-1525 / URRWXCal2) (Rickettsia azadi).